Here is a 905-residue protein sequence, read N- to C-terminus: Translation initiation factor IF-2 (905 aa).

Disordered stretches follow at residues 52 to 84 (QSHG…SKSV), 116 to 230 (AKKR…QKKT), and 269 to 318 (FEKE…FEKP). Over residues 65 to 84 (KSKTTSTARVTGSSGKSKSV) the composition is skewed to polar residues. Residues 116–138 (AKKRAEEEAKKREQVKKEAEERQ) show a composition bias toward basic and acidic residues. Residues 165-178 (VVVKKGSKAAAAAK) are compositionally biased toward low complexity. Basic and acidic residues-rich tracts occupy residues 190–230 (PKVE…QKKT) and 269–278 (FEKERREIKR). A tr-type G domain is found at 406 to 575 (TRPPVVTIMG…NLQAELMELE (170 aa)). A G1 region spans residues 415–422 (GHVDHGKT). GTP is bound at residue 415-422 (GHVDHGKT). The G2 stretch occupies residues 440–444 (GITQH). Residues 461-464 (DTPG) are G3. GTP is bound by residues 461–465 (DTPGH) and 515–518 (NKMD). Positions 515-518 (NKMD) are G4. Residues 551–553 (SAK) form a G5 region.

The protein belongs to the TRAFAC class translation factor GTPase superfamily. Classic translation factor GTPase family. IF-2 subfamily.

It is found in the cytoplasm. In terms of biological role, one of the essential components for the initiation of protein synthesis. Protects formylmethionyl-tRNA from spontaneous hydrolysis and promotes its binding to the 30S ribosomal subunits. Also involved in the hydrolysis of GTP during the formation of the 70S ribosomal complex. The polypeptide is Translation initiation factor IF-2 (Psychrobacter sp. (strain PRwf-1)).